We begin with the raw amino-acid sequence, 353 residues long: uncharacterized protein (353 aa).

A signal peptide spans methionine 1–alanine 28.

This is an uncharacterized protein from Archaeoglobus fulgidus (strain ATCC 49558 / DSM 4304 / JCM 9628 / NBRC 100126 / VC-16).